Here is an 896-residue protein sequence, read N- to C-terminus: Protein translocase subunit SecA (896 aa).

ATP contacts are provided by residues Gln-87, 105 to 109 (GEGKT), and Asp-512. A disordered region spans residues 858–886 (RAGGEAEAAKPVVRDEKKVGRNDPCPCGS). Basic and acidic residues predominate over residues 869–878 (VVRDEKKVGR). Positions 882, 884, 893, and 894 each coordinate Zn(2+).

The protein belongs to the SecA family. As to quaternary structure, monomer and homodimer. Part of the essential Sec protein translocation apparatus which comprises SecA, SecYEG and auxiliary proteins SecDF-YajC and YidC. Zn(2+) is required as a cofactor.

The protein localises to the cell inner membrane. It localises to the cytoplasm. It catalyses the reaction ATP + H2O + cellular proteinSide 1 = ADP + phosphate + cellular proteinSide 2.. Part of the Sec protein translocase complex. Interacts with the SecYEG preprotein conducting channel. Has a central role in coupling the hydrolysis of ATP to the transfer of proteins into and across the cell membrane, serving as an ATP-driven molecular motor driving the stepwise translocation of polypeptide chains across the membrane. This Syntrophotalea carbinolica (strain DSM 2380 / NBRC 103641 / GraBd1) (Pelobacter carbinolicus) protein is Protein translocase subunit SecA.